Consider the following 398-residue polypeptide: Endoglucanase (398 aa).

The N-terminal stretch at 1 to 23 (MSPLKCMALAALGAVMFVGSAQA) is a signal peptide. Glutamate 58 serves as the catalytic Proton donor. The active-site Nucleophile is the aspartate 119.

This sequence belongs to the glycosyl hydrolase 8 (cellulase D) family.

It localises to the secreted. It carries out the reaction Endohydrolysis of (1-&gt;4)-beta-D-glucosidic linkages in cellulose, lichenin and cereal beta-D-glucans.. It functions in the pathway glycan metabolism; bacterial cellulose biosynthesis. Hydrolyzes carboxymethylcellulose. This Pseudomonas fluorescens (strain SBW25) protein is Endoglucanase (bcsZ).